Here is a 746-residue protein sequence, read N- to C-terminus: Ferrienterobactin receptor (746 aa).

An N-terminal signal peptide occupies residues 1–22 (MNKKIHSLALLVNLGIYGVAQA). The TonB box signature appears at 34 to 41 (DTIVVTAA). The region spanning 42–169 (EQNLQAPGVS…AGGVVNIITK (128 aa)) is the TBDR plug domain. The interval 76 to 96 (GVNLTGNSTSGQRGNNRQIDI) is disordered. Positions 79-93 (LTGNSTSGQRGNNRQ) are enriched in polar residues. Residues 174-746 (EWHGSWDAYF…TWYMSVNTHF (573 aa)) form the TBDR beta-barrel domain. Residues 729–746 (YTYNEPGRTWYMSVNTHF) carry the TonB C-terminal box motif.

The protein belongs to the TonB-dependent receptor family.

It localises to the cell outer membrane. In terms of biological role, this protein is involved in the initial step of iron uptake by binding ferrienterobactin (Fe-ENT), an iron chelatin siderophore that allows E.coli to extract iron from the environment. FepA also acts as a receptor for colicins B and D. This chain is Ferrienterobactin receptor (fepA), found in Escherichia coli (strain K12).